Here is a 97-residue protein sequence, read N- to C-terminus: Large ribosomal subunit protein uL23 (97 aa).

It belongs to the universal ribosomal protein uL23 family. As to quaternary structure, part of the 50S ribosomal subunit. Contacts protein L29, and trigger factor when it is bound to the ribosome.

Functionally, one of the early assembly proteins it binds 23S rRNA. One of the proteins that surrounds the polypeptide exit tunnel on the outside of the ribosome. Forms the main docking site for trigger factor binding to the ribosome. This is Large ribosomal subunit protein uL23 from Brucella suis (strain ATCC 23445 / NCTC 10510).